The following is a 239-amino-acid chain: LexA repressor (239 aa).

The tract at residues 1–40 (MTEAATGPEGADPSRAARSLPGRPPGIRADSSGLTDRQRR) is disordered. The H-T-H motif DNA-binding region spans 58 to 78 (MREIGQAVGLSSTSSVAHQLM). Basic and acidic residues predominate over residues 89–100 (DPHRPRAYEVRG). The segment at 89–116 (DPHRPRAYEVRGSDQPSAQPADTSGKPA) is disordered. Catalysis depends on for autocatalytic cleavage activity residues serine 163 and lysine 200.

The protein belongs to the peptidase S24 family. In terms of assembly, homodimer.

The catalysed reaction is Hydrolysis of Ala-|-Gly bond in repressor LexA.. Its function is as follows. Represses a number of genes involved in the response to DNA damage (SOS response), including recA and lexA. In the presence of single-stranded DNA, RecA interacts with LexA causing an autocatalytic cleavage which disrupts the DNA-binding part of LexA, leading to derepression of the SOS regulon and eventually DNA repair. The polypeptide is LexA repressor (Streptomyces clavuligerus).